A 615-amino-acid chain; its full sequence is Nuclear cap-binding protein subunit 3 (615 aa).

A Glycyl lysine isopeptide (Lys-Gly) (interchain with G-Cter in SUMO2) cross-link involves residue lysine 12. Residues alanine 15 to glutamate 27 are compositionally biased toward low complexity. Residues alanine 15 to glutamate 43 are disordered. Serine 25 is modified (phosphoserine). A Glycyl lysine isopeptide (Lys-Gly) (interchain with G-Cter in SUMO2) cross-link involves residue lysine 70. Phosphoserine is present on serine 73. An RNA recognition motif (RRM) domain region spans residues glutamate 126 to methionine 187. Residues tryptophan 155 to aspartate 158 carry the WLDD motif; essential for 7-methylguanosine-containing mRNA cap binding motif. 2 disordered regions span residues proline 182 to leucine 233 and histidine 332 to aspartate 400. The segment covering aspartate 185–aspartate 208 has biased composition (basic and acidic residues). Lysine 186 participates in a covalent cross-link: Glycyl lysine isopeptide (Lys-Gly) (interchain with G-Cter in SUMO2). Phosphoserine is present on residues serine 209 and serine 210. Acidic residues-rich tracts occupy residues serine 209–leucine 230 and glutamate 341–alanine 360. A compositionally biased stretch (basic and acidic residues) spans aspartate 361–leucine 383. The residue at position 408 (threonine 408) is a Phosphothreonine. Serine 410 carries the post-translational modification Phosphoserine. Disordered stretches follow at residues serine 430–proline 454 and glutamate 467–serine 615. Basic and acidic residues predominate over residues valine 506–serine 516. Residue lysine 536 forms a Glycyl lysine isopeptide (Lys-Gly) (interchain with G-Cter in SUMO2) linkage. Composition is skewed to basic and acidic residues over residues lysine 549–glycine 564 and isoleucine 580–leucine 593. A Phosphoserine modification is found at serine 563. The span at glutamate 606–serine 615 shows a compositional bias: low complexity. Serine 615 is subject to Phosphoserine.

This sequence belongs to the NCBP3 family. Component of an alternative cap-binding complex (CBC) composed of NCBP1/CBP80 and NCBP3. Interacts with SRRT, KPNA3, THOC5 and EIF4A3.

It is found in the nucleus. Its subcellular location is the cytoplasm. Associates with NCBP1/CBP80 to form an alternative cap-binding complex (CBC) which plays a key role in mRNA export. NCBP3 serves as adapter protein linking the capped RNAs (m7GpppG-capped RNA) to NCBP1/CBP80. Unlike the conventional CBC with NCBP2 which binds both small nuclear RNA (snRNA) and messenger (mRNA) and is involved in their export from the nucleus, the alternative CBC with NCBP3 does not bind snRNA and associates only with mRNA thereby playing a role in only mRNA export. The alternative CBC is particularly important in cellular stress situations such as virus infections and the NCBP3 activity is critical to inhibit virus growth. The protein is Nuclear cap-binding protein subunit 3 of Mus musculus (Mouse).